Reading from the N-terminus, the 56-residue chain is Large ribosomal subunit protein uL30 (56 aa).

It belongs to the universal ribosomal protein uL30 family. In terms of assembly, part of the 50S ribosomal subunit.

This is Large ribosomal subunit protein uL30 from Nitratidesulfovibrio vulgaris (strain ATCC 29579 / DSM 644 / CCUG 34227 / NCIMB 8303 / VKM B-1760 / Hildenborough) (Desulfovibrio vulgaris).